A 186-amino-acid polypeptide reads, in one-letter code: Elongation factor P (186 aa).

Belongs to the elongation factor P family.

It localises to the cytoplasm. The protein operates within protein biosynthesis; polypeptide chain elongation. In terms of biological role, involved in peptide bond synthesis. Stimulates efficient translation and peptide-bond synthesis on native or reconstituted 70S ribosomes in vitro. Probably functions indirectly by altering the affinity of the ribosome for aminoacyl-tRNA, thus increasing their reactivity as acceptors for peptidyl transferase. This chain is Elongation factor P, found in Streptococcus agalactiae serotype Ia (strain ATCC 27591 / A909 / CDC SS700).